The chain runs to 475 residues: Ribulose bisphosphate carboxylase large chain (475 aa).

The propeptide occupies 1–2 (MS). Pro-3 carries the post-translational modification N-acetylproline. N6,N6,N6-trimethyllysine is present on Lys-14. 2 residues coordinate substrate: Asn-123 and Thr-173. Residue Lys-175 is the Proton acceptor of the active site. A substrate-binding site is contributed by Lys-177. Residues Lys-201, Asp-203, and Glu-204 each coordinate Mg(2+). Lys-201 is subject to N6-carboxylysine. His-294 functions as the Proton acceptor in the catalytic mechanism. Residues Arg-295, His-327, and Ser-379 each coordinate substrate.

It belongs to the RuBisCO large chain family. Type I subfamily. As to quaternary structure, heterohexadecamer of 8 large chains and 8 small chains; disulfide-linked. The disulfide link is formed within the large subunit homodimers. Requires Mg(2+) as cofactor. Post-translationally, the disulfide bond which can form in the large chain dimeric partners within the hexadecamer appears to be associated with oxidative stress and protein turnover.

The protein resides in the plastid. It localises to the chloroplast. It catalyses the reaction 2 (2R)-3-phosphoglycerate + 2 H(+) = D-ribulose 1,5-bisphosphate + CO2 + H2O. The enzyme catalyses D-ribulose 1,5-bisphosphate + O2 = 2-phosphoglycolate + (2R)-3-phosphoglycerate + 2 H(+). Functionally, ruBisCO catalyzes two reactions: the carboxylation of D-ribulose 1,5-bisphosphate, the primary event in carbon dioxide fixation, as well as the oxidative fragmentation of the pentose substrate in the photorespiration process. Both reactions occur simultaneously and in competition at the same active site. The chain is Ribulose bisphosphate carboxylase large chain from Carpinus caroliniana (American hornbeam).